A 125-amino-acid chain; its full sequence is UPF0231 protein in hemN 3'region (125 aa).

Belongs to the UPF0231 family.

The protein is UPF0231 protein in hemN 3'region of Mannheimia haemolytica (Pasteurella haemolytica).